A 418-amino-acid polypeptide reads, in one-letter code: UPF0754 membrane protein alr5253 (418 aa).

2 helical membrane-spanning segments follow: residues 10-30 (WSHLWLYVSPPILGGIIGYFT) and 394-414 (IVSLGGILGLIVGLFQTAFFI).

Belongs to the UPF0754 family.

It is found in the cell inner membrane. The polypeptide is UPF0754 membrane protein alr5253 (Nostoc sp. (strain PCC 7120 / SAG 25.82 / UTEX 2576)).